The chain runs to 385 residues: MALRKKNSLLNMANSYVLDSPQPSNLNYFWNFGSLLALCLVIQLATGITLAMHYTSHASLAFDSVEHIMRDVNFGWFIRYAHANTASFFFICIYAHMGRNIYYGSYKTPRVLPWSIGVIIFLLLIITAFMGYVLVFGQMSLWGATVICNLVSAIPWLGEDIVHFLWGGFSVGNPTLQRFFALHYLMPFVLAVFALLHLIALHTAGSSNPLGITSNVDKLSMHPYYSFKDLITVFAFLLMFTLFVFFSPDKLGHPDNYIPANPMVTPASIVPEWYLLPFYAILRAIPDKLGGVIAMVAAILILLILPIVDRSIIRGNAFKPISKLLFGFFICNFLLLGVLGQVHIEPPFIVLGQICTIFYFSYFLILLPMVSTIENIFFYIGSLRK.

Transmembrane regions (helical) follow at residues 32–52, 76–98, 113–133, and 179–199; these read FGSL…TLAM, WFIR…AHMG, PWSI…MGYV, and FFAL…LHLI. 2 residues coordinate heme b: histidine 82 and histidine 96. Positions 183 and 197 each coordinate heme b. Histidine 202 contacts a ubiquinone. Transmembrane regions (helical) follow at residues 225 to 245, 289 to 309, 321 to 341, and 348 to 368; these read YSFK…LFVF, LGGV…PIVD, ISKL…VLGQ, and FIVL…ILLP.

It belongs to the cytochrome b family. Fungal cytochrome b-c1 complex contains 10 subunits; 3 respiratory subunits, 2 core proteins and 5 low-molecular weight proteins. Cytochrome b-c1 complex is a homodimer. Heme b is required as a cofactor.

It localises to the mitochondrion inner membrane. Its function is as follows. Component of the ubiquinol-cytochrome c reductase complex (complex III or cytochrome b-c1 complex) that is part of the mitochondrial respiratory chain. The b-c1 complex mediates electron transfer from ubiquinol to cytochrome c. Contributes to the generation of a proton gradient across the mitochondrial membrane that is then used for ATP synthesis. This Yarrowia lipolytica (strain CLIB 122 / E 150) (Yeast) protein is Cytochrome b (COB).